Consider the following 77-residue polypeptide: Large ribosomal subunit protein uL24 (77 aa).

Belongs to the universal ribosomal protein uL24 family. In terms of assembly, part of the 50S ribosomal subunit.

One of two assembly initiator proteins, it binds directly to the 5'-end of the 23S rRNA, where it nucleates assembly of the 50S subunit. In terms of biological role, one of the proteins that surrounds the polypeptide exit tunnel on the outside of the subunit. This chain is Large ribosomal subunit protein uL24, found in Sulfurovum sp. (strain NBC37-1).